The chain runs to 198 residues: Ribonuclease HII (198 aa).

An RNase H type-2 domain is found at Q10–S198. Residues D16, E17, and D108 each coordinate a divalent metal cation.

This sequence belongs to the RNase HII family. Mn(2+) serves as cofactor. Mg(2+) is required as a cofactor.

It is found in the cytoplasm. It carries out the reaction Endonucleolytic cleavage to 5'-phosphomonoester.. Its function is as follows. Endonuclease that specifically degrades the RNA of RNA-DNA hybrids. The protein is Ribonuclease HII of Citrobacter koseri (strain ATCC BAA-895 / CDC 4225-83 / SGSC4696).